Consider the following 196-residue polypeptide: Ribosome maturation factor RimP (196 aa).

Belongs to the RimP family.

The protein resides in the cytoplasm. In terms of biological role, required for maturation of 30S ribosomal subunits. The protein is Ribosome maturation factor RimP of Dinoroseobacter shibae (strain DSM 16493 / NCIMB 14021 / DFL 12).